Consider the following 276-residue polypeptide: Ribosomal RNA small subunit methyltransferase A (276 aa).

S-adenosyl-L-methionine-binding residues include N27, L29, G54, E75, D101, and N122.

This sequence belongs to the class I-like SAM-binding methyltransferase superfamily. rRNA adenine N(6)-methyltransferase family. RsmA subfamily.

Its subcellular location is the cytoplasm. It catalyses the reaction adenosine(1518)/adenosine(1519) in 16S rRNA + 4 S-adenosyl-L-methionine = N(6)-dimethyladenosine(1518)/N(6)-dimethyladenosine(1519) in 16S rRNA + 4 S-adenosyl-L-homocysteine + 4 H(+). In terms of biological role, specifically dimethylates two adjacent adenosines (A1518 and A1519) in the loop of a conserved hairpin near the 3'-end of 16S rRNA in the 30S particle. May play a critical role in biogenesis of 30S subunits. The sequence is that of Ribosomal RNA small subunit methyltransferase A from Brucella abortus biovar 1 (strain 9-941).